Here is a 258-residue protein sequence, read N- to C-terminus: Acyl-[acyl-carrier-protein]--UDP-N-acetylglucosamine O-acyltransferase (258 aa).

The protein belongs to the transferase hexapeptide repeat family. LpxA subfamily. As to quaternary structure, homotrimer.

It localises to the cytoplasm. It carries out the reaction a (3R)-hydroxyacyl-[ACP] + UDP-N-acetyl-alpha-D-glucosamine = a UDP-3-O-[(3R)-3-hydroxyacyl]-N-acetyl-alpha-D-glucosamine + holo-[ACP]. Its pathway is glycolipid biosynthesis; lipid IV(A) biosynthesis; lipid IV(A) from (3R)-3-hydroxytetradecanoyl-[acyl-carrier-protein] and UDP-N-acetyl-alpha-D-glucosamine: step 1/6. In terms of biological role, involved in the biosynthesis of lipid A, a phosphorylated glycolipid that anchors the lipopolysaccharide to the outer membrane of the cell. This chain is Acyl-[acyl-carrier-protein]--UDP-N-acetylglucosamine O-acyltransferase, found in Pseudomonas savastanoi pv. phaseolicola (strain 1448A / Race 6) (Pseudomonas syringae pv. phaseolicola (strain 1448A / Race 6)).